A 92-amino-acid polypeptide reads, in one-letter code: Small ribosomal subunit protein uS19 (92 aa).

It belongs to the universal ribosomal protein uS19 family.

In terms of biological role, protein S19 forms a complex with S13 that binds strongly to the 16S ribosomal RNA. The chain is Small ribosomal subunit protein uS19 from Bacillus cytotoxicus (strain DSM 22905 / CIP 110041 / 391-98 / NVH 391-98).